Here is a 157-residue protein sequence, read N- to C-terminus: Ribonuclease (157 aa).

Residues 1 to 34 (MMKMEGIALKKRLSWISVCLLVLVSAAGMLFSTA) form the signal peptide. The propeptide occupies 35 to 47 (AKTETSSHKAHTE). The Proton acceptor role is filled by glutamate 120. The Proton donor role is filled by histidine 149.

Belongs to the ribonuclease N1/T1 family.

The protein resides in the secreted. In terms of biological role, hydrolyzes phosphodiester bonds in RNA, poly- and oligoribonucleotides resulting in 3'-nucleoside monophosphates via 2',3'-cyclophosphate intermediates. In Bacillus amyloliquefaciens (Bacillus velezensis), this protein is Ribonuclease.